Reading from the N-terminus, the 565-residue chain is Transmembrane 7 superfamily member 3 (565 aa).

The signal sequence occupies residues 1–21 (MWRLRLLVLAVLAAGSAEAQA). Residues Asn22, Asn56, Asn70, and Asn259 are each glycosylated (N-linked (GlcNAc...) asparagine). The next 7 helical transmembrane spans lie at 287-307 (VSTKVFSTLFALLGLFTCFFG), 311-331 (WKTELFFVGFIFLGFFFYILI), 341-361 (VRLVLTAVAGSIGGLLLVASW), 364-384 (FGILTLCMLCVGLVLGFLVSS), 402-422 (VFWVTFSCIALLVPVIFLGCL), 427-447 (ILACGIVGSYSVVLAINSYMF), and 478-498 (NDYIILAVWGMLAVTGITLQI).

It localises to the cell membrane. Its function is as follows. Involved in the inhibition of cytokine-induced death of pancreatic beta cells. Involved in the promotion of insulin secretion from pancreatic beta cells. Is a downstream transcriptional target of p53/TP53, and acts as a pro-survival homeostatic factor that attenuates the development of cellular stress. Maintains protein homeostasis and promotes cell survival through attenuation of endoplasmic reticulum (ER) stress and the subsequent induction of unfolded protein response (UPR). The polypeptide is Transmembrane 7 superfamily member 3 (Tm7sf3) (Rattus norvegicus (Rat)).